We begin with the raw amino-acid sequence, 2248 residues long: Zinc finger protein 407 (2248 aa).

Positions 1 to 32 (MMDSENKPENDEDEKINKEAQDLTKLSSHNED) are enriched in basic and acidic residues. A disordered region spans residues 1–84 (MMDSENKPEN…RRKLDEAEPL (84 aa)). C2H2-type zinc fingers lie at residues 186–208 (LKCS…AESH), 215–238 (HTCC…KQAH), and 244–268 (FSCD…GKTH). Disordered stretches follow at residues 291–322 (KKSR…GLRN) and 494–515 (SETQ…GLHS). Residues 494–504 (SETQEAEQGQG) show a composition bias toward polar residues. 3 C2H2-type zinc fingers span residues 528-551 (CACT…KRCH), 557-581 (FYCR…SNQH), and 615-639 (FLCT…TEKH). A disordered region spans residues 667 to 700 (ESENAKESMDDSGKASQEEPLKSRVSHGNEVRHS). The segment covering 669–699 (ENAKESMDDSGKASQEEPLKSRVSHGNEVRH) has biased composition (basic and acidic residues). The C2H2-type 7 zinc finger occupies 705–728 (FQCKKCFYKTRSSTVLTRHIKLRH). Residues 821–847 (LSQSGGSTKDDELASTTTPKRGRPKGN) form a disordered region. 2 C2H2-type zinc fingers span residues 850–873 (RTCS…RRKH) and 879–903 (YLCK…TKKH). The disordered stretch occupies residues 910–962 (EASGKHSSDIIVGPEGGSLEAGKKNAGSAVTMSDEHANKPAESPTSVLEKPDR). 2 consecutive C2H2-type zinc fingers follow at residues 1017–1040 (NKCL…KRKH) and 1046–1070 (FYCM…TEKH). At Ser-1262 the chain carries Phosphoserine. C2H2-type zinc fingers lie at residues 1444–1468 (FHCL…SAGH) and 1486–1509 (FKCV…KGQH). The C2H2-type 14; degenerate zinc finger occupies 1537–1561 (NVCKYCGKMCRSSNSMAFLAHIRTH). C2H2-type zinc fingers lie at residues 1567 to 1589 (FKCK…VKRH), 1595 to 1618 (YKCH…LGKH), 1628 to 1650 (FTCH…MKLH), 1656 to 1680 (FKCT…YRTH), 1686 to 1708 (FLCD…RRQH), 1714 to 1736 (FKCD…KRVH), 1742 to 1767 (YRCP…TGKH), and 1773 to 1796 (YNCP…KEQH).

Its subcellular location is the nucleus. May be involved in transcriptional regulation. This chain is Zinc finger protein 407 (ZNF407), found in Homo sapiens (Human).